The sequence spans 184 residues: Protein CPn_0803/CP_1068/CPj0803/CpB0832 (184 aa).

Belongs to the chlamydial CPn_0803/CT_584/TC_0873 family.

The protein is Protein CPn_0803/CP_1068/CPj0803/CpB0832 of Chlamydia pneumoniae (Chlamydophila pneumoniae).